A 500-amino-acid polypeptide reads, in one-letter code: Phenylalanine--tRNA ligase alpha subunit (500 aa).

L-phenylalanine-binding positions include T343, 382-384 (QID), and F423. Mg(2+) is bound at residue E425. F448 is an L-phenylalanine binding site.

This sequence belongs to the class-II aminoacyl-tRNA synthetase family. Phe-tRNA synthetase alpha subunit type 2 subfamily. In terms of assembly, tetramer of two alpha and two beta subunits. It depends on Mg(2+) as a cofactor.

Its subcellular location is the cytoplasm. The catalysed reaction is tRNA(Phe) + L-phenylalanine + ATP = L-phenylalanyl-tRNA(Phe) + AMP + diphosphate + H(+). This chain is Phenylalanine--tRNA ligase alpha subunit, found in Pyrococcus abyssi (strain GE5 / Orsay).